The chain runs to 156 residues: Small ribosomal subunit protein uS7 (156 aa).

Belongs to the universal ribosomal protein uS7 family. In terms of assembly, part of the 30S ribosomal subunit. Contacts proteins S9 and S11.

In terms of biological role, one of the primary rRNA binding proteins, it binds directly to 16S rRNA where it nucleates assembly of the head domain of the 30S subunit. Is located at the subunit interface close to the decoding center, probably blocks exit of the E-site tRNA. The polypeptide is Small ribosomal subunit protein uS7 (Novosphingobium aromaticivorans (strain ATCC 700278 / DSM 12444 / CCUG 56034 / CIP 105152 / NBRC 16084 / F199)).